The primary structure comprises 1018 residues: Antigenic heat-stable 120 kDa protein (1018 aa).

The span at Met1–Glu11 shows a compositional bias: polar residues. Disordered stretches follow at residues Met1–Thr82, Gly355–Ser402, and Arg995–Arg1018. Positions Glu19–Glu34 are enriched in basic and acidic residues. Residues Thr53–Ser68 are compositionally biased toward low complexity. 4 stretches are compositionally biased toward polar residues: residues Gly69–Pro80, Gly355–Gln380, Pro387–Ser402, and Asp996–Thr1007. A compositionally biased stretch (basic and acidic residues) spans Ile1009–Arg1018.

It localises to the cytoplasm. The chain is Antigenic heat-stable 120 kDa protein (sca4) from Rickettsia japonica (strain ATCC VR-1363 / YH).